We begin with the raw amino-acid sequence, 142 residues long: MVLSPADKTNIKTAWEKIGSHGGEYGAEAVERMFLGFPTTKTYFPHFDFTHGSEQIKAHGKKVSEALTKAVGHLDDLPGALSTLSDLHAHKLRVDPVNFKLLSHCLLVTLANHHPSEFTPAVHASLDKFLANVSTVLTSKYR.

A Globin domain is found at 2-142 (VLSPADKTNI…VSTVLTSKYR (141 aa)). Residue S4 is modified to Phosphoserine. K8 is modified (N6-succinyllysine). A Phosphothreonine modification is found at T9. Residue K12 is modified to N6-succinyllysine. N6-acetyllysine; alternate is present on K17. K17 carries the N6-succinyllysine; alternate modification. Y25 carries the phosphotyrosine modification. An N6-succinyllysine modification is found at K41. H59 contacts O2. A heme b-binding site is contributed by H88. Position 103 is a phosphoserine (S103). At T109 the chain carries Phosphothreonine. A Phosphoserine modification is found at S125. A phosphothreonine mark is found at T135 and T138. S139 carries the post-translational modification Phosphoserine.

This sequence belongs to the globin family. As to quaternary structure, heterotetramer of two alpha chains and two beta chains. As to expression, red blood cells.

Functionally, involved in oxygen transport from the lung to the various peripheral tissues. The polypeptide is Hemoglobin subunit alpha-1/2 (Oryctolagus cuniculus (Rabbit)).